Here is a 260-residue protein sequence, read N- to C-terminus: Ribonuclease HII (260 aa).

Residues 75 to 260 enclose the RNase H type-2 domain; the sequence is ELIAGVDEVG…FEPIKSIIKK (186 aa). 3 residues coordinate a divalent metal cation: Asp-81, Glu-82, and Asp-173.

The protein belongs to the RNase HII family. Mn(2+) is required as a cofactor. The cofactor is Mg(2+).

The protein localises to the cytoplasm. It carries out the reaction Endonucleolytic cleavage to 5'-phosphomonoester.. Functionally, endonuclease that specifically degrades the RNA of RNA-DNA hybrids. The chain is Ribonuclease HII from Streptococcus thermophilus (strain CNRZ 1066).